The chain runs to 122 residues: Small ribosomal subunit protein uS13 (122 aa).

The tract at residues 98–122 (VRGQRTHTNARTRKGPAKAIAGKKK) is disordered.

The protein belongs to the universal ribosomal protein uS13 family. In terms of assembly, part of the 30S ribosomal subunit. Forms a loose heterodimer with protein S19. Forms two bridges to the 50S subunit in the 70S ribosome.

In terms of biological role, located at the top of the head of the 30S subunit, it contacts several helices of the 16S rRNA. In the 70S ribosome it contacts the 23S rRNA (bridge B1a) and protein L5 of the 50S subunit (bridge B1b), connecting the 2 subunits; these bridges are implicated in subunit movement. Contacts the tRNAs in the A and P-sites. In Roseobacter denitrificans (strain ATCC 33942 / OCh 114) (Erythrobacter sp. (strain OCh 114)), this protein is Small ribosomal subunit protein uS13.